Here is a 243-residue protein sequence, read N- to C-terminus: Small ribosomal subunit protein uS3 (243 aa).

Residues 22-93 (LNEFLTRELA…SVELYAEKVA (72 aa)) enclose the KH type-2 domain. The segment at 195–243 (QQGKNGPKKPQPDHILVTEPKDEPAPLEPTSDIRSLAPAPLPQPVAAVA) is disordered.

This sequence belongs to the universal ribosomal protein uS3 family.

The sequence is that of Small ribosomal subunit protein uS3 (RpS3) from Manduca sexta (Tobacco hawkmoth).